A 432-amino-acid polypeptide reads, in one-letter code: Transcriptional adapter 3 (432 aa).

The stretch at 40–69 (IEELDTLQLELETLLSSASRRLRVLEAETQ) forms a coiled coil. 2 disordered regions span residues 88-127 (KEHE…RNMQ) and 275-313 (SPVE…HTKS). The span at 293-305 (DGASTSPRSQNKP) shows a compositional bias: polar residues. Positions 367–407 (LLRLAKEEMNRQELRQRVRMADNEVMDAFRKIMAARQKKRT) form a coiled coil.

It belongs to the NGG1 family.

It localises to the nucleus. Its function is as follows. Functions as a component of the PCAF complex. The PCAF complex is capable of efficiently acetylating histones in a nucleosomal context. The chain is Transcriptional adapter 3 (tada3) from Xenopus tropicalis (Western clawed frog).